The primary structure comprises 186 residues: Elongation factor P (186 aa).

The protein belongs to the elongation factor P family.

Its subcellular location is the cytoplasm. Its pathway is protein biosynthesis; polypeptide chain elongation. In terms of biological role, involved in peptide bond synthesis. Stimulates efficient translation and peptide-bond synthesis on native or reconstituted 70S ribosomes in vitro. Probably functions indirectly by altering the affinity of the ribosome for aminoacyl-tRNA, thus increasing their reactivity as acceptors for peptidyl transferase. The protein is Elongation factor P of Prochlorococcus marinus (strain MIT 9301).